A 248-amino-acid chain; its full sequence is Stage II sporulation protein SA (248 aa).

The Extracellular portion of the chain corresponds to 1–3 (MVL). Residues 4-21 (FFQIMVWCIVAGLGLYVY) form a helical membrane-spanning segment. Over 22–41 (ATWRFEAKVKEKMSAIRKTW) the chain is Cytoplasmic. A helical membrane pass occupies residues 42-64 (YLLFVLGAMVYWTYEPTSLFTHW). The Extracellular segment spans residues 65–67 (ERY). A helical transmembrane segment spans residues 68 to 87 (LIVAVSFALIDAFIFLSAYV). The Cytoplasmic segment spans residues 88–248 (KKLAGSELET…VLPIEEEGEG (161 aa)).

This sequence belongs to the SpoIISA toxin family. As to quaternary structure, probably forms an oligomer; X-ray data suggests the inactive complex forms a heterotetramer of SpoIISA(2)-SpoIISB(2), which inactivates the toxic activity of SpoIISA.

It is found in the cell membrane. In terms of biological role, toxic component of a type II toxin-antitoxin (TA) system. Its toxic activity is neutralized by cognate antitoxin SpoIISB. Expression in the absence of SpoIISB permits sporulation to stage II, when plasmolysis zones and holes in the peptidoglycan layer are observed, resulting in cell death. Lethal when synthesized during vegetative growth in the absence of SpoIISB. In E.coli both the membrane bound and soluble domain are required in cis for toxin activity. This is Stage II sporulation protein SA (spoIISA) from Bacillus subtilis (strain 168).